Here is a 265-residue protein sequence, read N- to C-terminus: Glutamate 5-kinase (265 aa).

K15 is a binding site for ATP. Substrate-binding residues include S55, D142, and N158. ATP-binding positions include 178–179 and 220–226; these read SD and TGGMVTK.

Belongs to the glutamate 5-kinase family.

It is found in the cytoplasm. The catalysed reaction is L-glutamate + ATP = L-glutamyl 5-phosphate + ADP. The protein operates within amino-acid biosynthesis; L-proline biosynthesis; L-glutamate 5-semialdehyde from L-glutamate: step 1/2. Catalyzes the transfer of a phosphate group to glutamate to form L-glutamate 5-phosphate. In Lactiplantibacillus plantarum (strain ATCC BAA-793 / NCIMB 8826 / WCFS1) (Lactobacillus plantarum), this protein is Glutamate 5-kinase.